Here is a 115-residue protein sequence, read N- to C-terminus: MNEIIRAIEKEQIREDLTQFNIGDTIKVHVRIKEGNRERIQVFEGTVIKKQNGGLRETFTVRRVAYGVGVERTFPINAPIIDKIDVVRRGKVRRAKLFYLRDRVGKAAKVKELTR.

It belongs to the bacterial ribosomal protein bL19 family.

Functionally, this protein is located at the 30S-50S ribosomal subunit interface and may play a role in the structure and function of the aminoacyl-tRNA binding site. This Clostridium perfringens (strain ATCC 13124 / DSM 756 / JCM 1290 / NCIMB 6125 / NCTC 8237 / Type A) protein is Large ribosomal subunit protein bL19.